The sequence spans 342 residues: DDB1- and CUL4-associated factor 7 (342 aa).

7 WD repeats span residues 6–52 (KRKE…LVGL), 60–100 (ICRN…VWRV), 108–150 (ECLL…IWGL), 165–206 (HVKT…MFDL), 213–252 (TIIY…ILDV), 257–296 (TPVA…IWDI), and 303–342 (IEDP…ILRV).

Belongs to the WD repeat DCAF7 family. As to quaternary structure, interacts with DYRK1A, DYRK1B and DIAPH1. Interacts with DDB1. Interacts with ZNF703. Interacts with human adenovirus 5 E1A protein.

It is found in the cytoplasm. It localises to the nucleus. The protein operates within protein modification; protein ubiquitination. Functionally, involved in craniofacial development. Acts upstream of the EDN1 pathway and is required for formation of the upper jaw equivalent, the palatoquadrate. The activity required for EDN1 pathway function differs between the first and second arches. Associates with DIAPH1 and controls GLI1 transcriptional activity. Could be involved in normal and disease skin development. May function as a substrate receptor for CUL4-DDB1 E3 ubiquitin-protein ligase complex. This chain is DDB1- and CUL4-associated factor 7 (DCAF7), found in Homo sapiens (Human).